Reading from the N-terminus, the 188-residue chain is PRA1 family protein F4 (188 aa).

Polar residues predominate over residues 1-13 (MANNDEITTSSHA). A disordered region spans residues 1-25 (MANNDEITTSSHASPAVNHESISRA). The next 4 helical transmembrane spans lie at 67 to 86 (YFRS…SLIW), 90 to 107 (SLIV…LYFL), 119 to 139 (IDDR…LLLT), and 142 to 162 (TFNI…HAVI).

The protein belongs to the PRA1 family.

Its subcellular location is the endosome membrane. May be involved in both secretory and endocytic intracellular trafficking in the endosomal/prevacuolar compartments. The chain is PRA1 family protein F4 (PRA1F4) from Arabidopsis thaliana (Mouse-ear cress).